The sequence spans 258 residues: tRNA pseudouridine synthase A (258 aa).

Aspartate 53 functions as the Nucleophile in the catalytic mechanism. Tyrosine 111 lines the substrate pocket.

Belongs to the tRNA pseudouridine synthase TruA family. Homodimer.

It catalyses the reaction uridine(38/39/40) in tRNA = pseudouridine(38/39/40) in tRNA. In terms of biological role, formation of pseudouridine at positions 38, 39 and 40 in the anticodon stem and loop of transfer RNAs. This chain is tRNA pseudouridine synthase A, found in Streptococcus agalactiae serotype V (strain ATCC BAA-611 / 2603 V/R).